The sequence spans 556 residues: MIITTKALTVLPHSGLRTTHRSLLARLRHYFKNMLCPDLHPPATVRGMKLLDRSAFSKTIKVPHLLVPKDKNLNDICRASKKYLLKMERYKPVITEQYKITLHPLAVQKWEDLADLNLEKLDIGSEALVWEEIQLKYENWKYDEIFKAVLPADKEALSSFSKIGHIIHLNLKDHLLPYKELIGQVICDKIADCRTVVNKSLSIDNTYRNFQMELLCGEPDYRVSVKENACLFEFDFSKVYWNPRLSTEHEKIVKMLAKTDTLFDLYAGVGPFTVPAARRGCKVLANDLNPDSYEALVNNCALNKVSKHVTCHNKDAVDFIKHEVKQALLEKCTDESMEGDIHITMNLPAMAVEHLVHFPGLLKDEDVVLRKQPLVHVYCFAKGVEDKKQIARELVEHWLGTDVTDKLKEIAFVRNVAPNKDMMRVSFYLTEDLLLGRTAVKKRQHEEEDLPQLEEAKRPSNKMKDQRKQLAKKAKTVFSVSQVKKGNLKKTKEVSSNLKKIQVNDKREKVDKKFENLHAQIVSKKAAKPAPKPLPAKNKSKPDTKKIEADLNEMQM.

A mitochondrion-targeting transit peptide spans 1-30 (MIITTKALTVLPHSGLRTTHRSLLARLRHY). S-adenosyl-L-methionine contacts are provided by residues histidine 249, 287–288 (DL), 315–316 (DA), and asparagine 346. Disordered regions lie at residues 444-465 (QHEE…KMKD) and 524-556 (KKAA…EMQM). Composition is skewed to basic and acidic residues over residues 454–465 (EEAKRPSNKMKD) and 540–549 (SKPDTKKIEA).

This sequence belongs to the class I-like SAM-binding methyltransferase superfamily. TRM5/TYW2 family. As to quaternary structure, monomer.

Its subcellular location is the mitochondrion matrix. It localises to the nucleus. It is found in the cytoplasm. The catalysed reaction is guanosine(37) in tRNA + S-adenosyl-L-methionine = N(1)-methylguanosine(37) in tRNA + S-adenosyl-L-homocysteine + H(+). Functionally, specifically methylates the N1 position of guanosine-37 in various cytoplasmic and mitochondrial tRNAs. Methylation is not dependent on the nature of the nucleoside 5' of the target nucleoside. This is the first step in the biosynthesis of wybutosine (yW), a modified base adjacent to the anticodon of tRNAs and required for accurate decoding. The polypeptide is tRNA (guanine(37)-N(1))-methyltransferase (Anopheles gambiae (African malaria mosquito)).